Here is a 295-residue protein sequence, read N- to C-terminus: NAD kinase (295 aa).

D73 acts as the Proton acceptor in catalysis. NAD(+) contacts are provided by residues 73-74 (DG), R78, 146-147 (NE), K157, R174, D176, and 187-192 (TAYSLS).

Belongs to the NAD kinase family. A divalent metal cation serves as cofactor.

It localises to the cytoplasm. The enzyme catalyses NAD(+) + ATP = ADP + NADP(+) + H(+). In terms of biological role, involved in the regulation of the intracellular balance of NAD and NADP, and is a key enzyme in the biosynthesis of NADP. Catalyzes specifically the phosphorylation on 2'-hydroxyl of the adenosine moiety of NAD to yield NADP. This chain is NAD kinase, found in Wigglesworthia glossinidia brevipalpis.